Consider the following 297-residue polypeptide: UDP-N-acetylenolpyruvoylglucosamine reductase (297 aa).

The FAD-binding PCMH-type domain maps to 27–192 (IGGPADALLE…LRAAYRLHPG (166 aa)). Arg-170 is a catalytic residue. Ser-220 (proton donor) is an active-site residue. Residue Glu-290 is part of the active site.

The protein belongs to the MurB family. The cofactor is FAD.

Its subcellular location is the cytoplasm. The enzyme catalyses UDP-N-acetyl-alpha-D-muramate + NADP(+) = UDP-N-acetyl-3-O-(1-carboxyvinyl)-alpha-D-glucosamine + NADPH + H(+). Its pathway is cell wall biogenesis; peptidoglycan biosynthesis. Cell wall formation. The protein is UDP-N-acetylenolpyruvoylglucosamine reductase of Rubrobacter xylanophilus (strain DSM 9941 / JCM 11954 / NBRC 16129 / PRD-1).